The sequence spans 137 residues: uncharacterized protein (137 aa).

In terms of domain architecture, Ubiquitin-like spans 58–135; sequence VHVVAKTVRP…EVNLQMFLMN (78 aa).

Its subcellular location is the cytoplasm. The protein localises to the nucleus. This is an uncharacterized protein from Schizosaccharomyces pombe (strain 972 / ATCC 24843) (Fission yeast).